We begin with the raw amino-acid sequence, 193 residues long: Phosphoheptose isomerase (193 aa).

The SIS domain maps to 37 to 193; that stretch reads LADSFKAGGK…QLIEKEMVKA (157 aa). Position 52-54 (52-54) interacts with substrate; the sequence is NGG. Residues His-61 and Glu-65 each coordinate Zn(2+). Substrate-binding positions include Glu-65, 93–94, 119–121, Ser-124, and Gln-172; these read ND and STS. Zn(2+)-binding residues include Gln-172 and His-180.

Belongs to the SIS family. GmhA subfamily. As to quaternary structure, homotetramer. Zn(2+) serves as cofactor.

The protein resides in the cytoplasm. It carries out the reaction 2 D-sedoheptulose 7-phosphate = D-glycero-alpha-D-manno-heptose 7-phosphate + D-glycero-beta-D-manno-heptose 7-phosphate. Its pathway is carbohydrate biosynthesis; D-glycero-D-manno-heptose 7-phosphate biosynthesis; D-glycero-alpha-D-manno-heptose 7-phosphate and D-glycero-beta-D-manno-heptose 7-phosphate from sedoheptulose 7-phosphate: step 1/1. The protein operates within bacterial outer membrane biogenesis; LPS core biosynthesis. Functionally, catalyzes the isomerization of sedoheptulose 7-phosphate in D-glycero-D-manno-heptose 7-phosphate. This Yersinia pestis protein is Phosphoheptose isomerase.